Reading from the N-terminus, the 100-residue chain is NADH-quinone oxidoreductase subunit K 2 (100 aa).

The next 3 membrane-spanning stretches (helical) occupy residues 2–22 (LAIE…TIGV), 29–49 (IVIF…FIAF), and 61–81 (FVFF…ALMI).

It belongs to the complex I subunit 4L family. As to quaternary structure, NDH-1 is composed of 14 different subunits. Subunits NuoA, H, J, K, L, M, N constitute the membrane sector of the complex.

The protein resides in the cell inner membrane. It catalyses the reaction a quinone + NADH + 5 H(+)(in) = a quinol + NAD(+) + 4 H(+)(out). Its function is as follows. NDH-1 shuttles electrons from NADH, via FMN and iron-sulfur (Fe-S) centers, to quinones in the respiratory chain. The immediate electron acceptor for the enzyme in this species is believed to be ubiquinone. Couples the redox reaction to proton translocation (for every two electrons transferred, four hydrogen ions are translocated across the cytoplasmic membrane), and thus conserves the redox energy in a proton gradient. The sequence is that of NADH-quinone oxidoreductase subunit K 2 from Citrifermentans bemidjiense (strain ATCC BAA-1014 / DSM 16622 / JCM 12645 / Bem) (Geobacter bemidjiensis).